The sequence spans 356 residues: MTERRIIHIDMDYFFAQVEMRDNPKLKGKPVIVGGKASSRGVVSTASYEARKYGVHSAMPMSQAHKLCPNGYFVTSNFGAYRETSAQIMSIFRSYTDKVEPMSLDEAYLDITELVRPDLPASKIAQYIRKDILEQTHLTASAGVSYNKFLAKLASGMNKPDGMTVIDYQNVHDILMTLDIGDFPGVGKASKKVMHDNGIFNGRDLYEKTEFELIRLFGKRGRGLYNKARGIDHSEVKSSRVRKSVGTERTFATDVNDDEEILRKVWELSGKTAERLNKLQKSAKTVTVKIKTYQFETLSKQMSLRDSVSSEEDIYNIAYLLYNDLKDPDVPIRLIGVTVGNLEQSTYKNMTIYDFI.

The UmuC domain occupies 6–187 (IIHIDMDYFF…LDIGDFPGVG (182 aa)). Residues aspartate 10 and aspartate 105 each coordinate Mg(2+). Glutamate 106 is a catalytic residue.

Belongs to the DNA polymerase type-Y family. As to quaternary structure, monomer. It depends on Mg(2+) as a cofactor.

Its subcellular location is the cytoplasm. The catalysed reaction is DNA(n) + a 2'-deoxyribonucleoside 5'-triphosphate = DNA(n+1) + diphosphate. In terms of biological role, poorly processive, error-prone DNA polymerase involved in untargeted mutagenesis. Copies undamaged DNA at stalled replication forks, which arise in vivo from mismatched or misaligned primer ends. These misaligned primers can be extended by PolIV. Exhibits no 3'-5' exonuclease (proofreading) activity. May be involved in translesional synthesis, in conjunction with the beta clamp from PolIII. This Staphylococcus aureus (strain COL) protein is DNA polymerase IV.